The sequence spans 130 residues: Small ribosomal subunit protein uS8 (130 aa).

It belongs to the universal ribosomal protein uS8 family. As to quaternary structure, part of the 30S ribosomal subunit.

In terms of biological role, one of the primary rRNA binding proteins, it binds directly to 16S rRNA central domain where it helps coordinate assembly of the platform of the 30S subunit. In Halorubrum lacusprofundi (strain ATCC 49239 / DSM 5036 / JCM 8891 / ACAM 34), this protein is Small ribosomal subunit protein uS8.